The following is a 172-amino-acid chain: Large ribosomal subunit protein uL10 (172 aa).

It belongs to the universal ribosomal protein uL10 family. As to quaternary structure, part of the ribosomal stalk of the 50S ribosomal subunit. The N-terminus interacts with L11 and the large rRNA to form the base of the stalk. The C-terminus forms an elongated spine to which L12 dimers bind in a sequential fashion forming a multimeric L10(L12)X complex.

Its function is as follows. Forms part of the ribosomal stalk, playing a central role in the interaction of the ribosome with GTP-bound translation factors. This chain is Large ribosomal subunit protein uL10, found in Rhodopseudomonas palustris (strain BisA53).